Reading from the N-terminus, the 375-residue chain is Eukaryotic translation initiation factor 3 subunit M (375 aa).

Positions 180–339 constitute a PCI domain; that stretch reads AAAKVMVELL…RKVVVSHSTH (160 aa).

It belongs to the eIF-3 subunit M family. In terms of assembly, component of the eukaryotic translation initiation factor 3 (eIF-3) complex, which is composed of 13 subunits: eif3a, eif3b, eif3c, eif3d, eif3e, eif3f, eif3g, eif3h, eif3i, eif3j, eif3k, eif3l and eif3m.

Its subcellular location is the cytoplasm. In terms of biological role, component of the eukaryotic translation initiation factor 3 (eIF-3) complex, which is involved in protein synthesis of a specialized repertoire of mRNAs and, together with other initiation factors, stimulates binding of mRNA and methionyl-tRNAi to the 40S ribosome. The eIF-3 complex specifically targets and initiates translation of a subset of mRNAs involved in cell proliferation. This chain is Eukaryotic translation initiation factor 3 subunit M (eif3m), found in Danio rerio (Zebrafish).